A 92-amino-acid chain; its full sequence is Small ribosomal subunit protein uS19 (92 aa).

Belongs to the universal ribosomal protein uS19 family.

Protein S19 forms a complex with S13 that binds strongly to the 16S ribosomal RNA. The chain is Small ribosomal subunit protein uS19 from Oceanobacillus iheyensis (strain DSM 14371 / CIP 107618 / JCM 11309 / KCTC 3954 / HTE831).